The chain runs to 427 residues: MVETFSFAHLAYLVFESVLQVVIIALAGFWSASSGLLPKQSQKIISLLNVDLFTPCLIFSKLAKSLSMAKIFEIAIIPIFFGLTTGISFISGKIMSRILDLDKDETNFVVANSVFGNSNSLPVSLTLSLAYTLPNLTWDQIPNDNRDNVASRGILYLLIFQQIGQMLRWSWGYNKLMKWSGENTQHMPPSQVQSLLERTPNIDNEELVNEEQEEQELLEEENNRMNSSFLSSSSIGDKIWQKSCTVFERIRANLNPPLYSMIFAVVVAAIGPLQRELFMEDGFINNTFAEAVTQLGSVSIPLILVVLGSNLYPSAEVFPKTVHHSKLLIGSIIGRMILPSCFLLPIIAIAVKYINVSILDDPIFLVVGFLLTVSPPAIQLTQITQLNEFFEAEMADILFWGYAVLSLPVSIIVVSGAIYVLQWANPT.

The next 3 helical transmembrane spans lie at 10 to 30, 43 to 63, and 71 to 91; these read LAYLVFESVLQVVIIALAGFW, KIISLLNVDLFTPCLIFSKLA, and IFEIAIIPIFFGLTTGISFIS. Threonine 199 is subject to Phosphothreonine. Phosphoserine is present on serine 234. The next 5 membrane-spanning stretches (helical) occupy residues 253–273, 288–308, 327–347, 358–378, and 397–417; these read NLNPPLYSMIFAVVVAAIGPL, FAEAVTQLGSVSIPLILVVLG, LLIGSIIGRMILPSCFLLPII, ILDDPIFLVVGFLLTVSPPAI, and ILFWGYAVLSLPVSIIVVSGA.

It belongs to the auxin efflux carrier (TC 2.A.69) family.

The protein resides in the membrane. This is an uncharacterized protein from Saccharomyces cerevisiae (strain ATCC 204508 / S288c) (Baker's yeast).